Reading from the N-terminus, the 126-residue chain is Small ribosomal subunit protein bS6 (126 aa).

Residues 101 to 126 form a disordered region; sequence VMMKAKEERTAKREDAAPRAEEAAAE. Residues 104–126 are compositionally biased toward basic and acidic residues; it reads KAKEERTAKREDAAPRAEEAAAE.

Belongs to the bacterial ribosomal protein bS6 family.

Functionally, binds together with bS18 to 16S ribosomal RNA. This is Small ribosomal subunit protein bS6 from Aliivibrio salmonicida (strain LFI1238) (Vibrio salmonicida (strain LFI1238)).